A 330-amino-acid polypeptide reads, in one-letter code: Pre-mRNA-splicing factor 38 (330 aa).

The disordered stretch occupies residues 182-330 (SVLDEDLDDE…SRGERDRRRY (149 aa)). The span at 184-199 (LDEDLDDELPSDEEKA) shows a compositional bias: acidic residues. Residues 213–224 (RRPRRVRSKSRS) show a composition bias toward basic residues. A compositionally biased stretch (basic and acidic residues) spans 240–330 (RSRDYYDELE…SRGERDRRRY (91 aa)).

It belongs to the PRP38 family. In terms of assembly, component of the spliceosome C complex. Interacts with Mfap1 (via C-terminus). Detected in all germal and follicle cells.

It localises to the nucleus. In terms of biological role, required for pre-mRNA splicing. This chain is Pre-mRNA-splicing factor 38, found in Drosophila melanogaster (Fruit fly).